The following is a 287-amino-acid chain: Hypersensitive-induced response protein-like protein 2 (287 aa).

The N-myristoyl glycine moiety is linked to residue glycine 2.

Positive regulator of hypersensitive response (HR)-like cell death. May be involved in potassium ion channel regulation. This is Hypersensitive-induced response protein-like protein 2 (HIRL2) from Oryza sativa subsp. japonica (Rice).